The primary structure comprises 345 residues: Protein-arginine kinase (345 aa).

The Phosphagen kinase C-terminal domain maps to 15–245 (LVISSRIRLA…LQIINQEIIS (231 aa)). Residues 18 to 22 (SSRIR), His82, Arg116, 167 to 171 (RASVM), and 198 to 203 (RGLYGE) each bind ATP. Residues 328 to 333 (RDFNRA) carry the RDXXRA motif of the pArg binding pocket involved in allosteric regulation motif.

This sequence belongs to the ATP:guanido phosphotransferase family.

It catalyses the reaction L-arginyl-[protein] + ATP = N(omega)-phospho-L-arginyl-[protein] + ADP + H(+). With respect to regulation, appears to be allosterically activated by the binding of pArg-containing polypeptides to the pArg-binding pocket localized in the C-terminal domain of McsB. Functionally, catalyzes the specific phosphorylation of arginine residues in proteins. This chain is Protein-arginine kinase, found in Clostridium kluyveri (strain NBRC 12016).